A 1857-amino-acid polypeptide reads, in one-letter code: Phosphatidylinositol 3-kinase 2 (1857 aa).

2 stretches are compositionally biased toward low complexity: residues 1–32 (MKMS…SNGS) and 42–55 (NLSV…SNNS). Disordered stretches follow at residues 1-61 (MKMS…KSST), 145-313 (TPLN…TNRV), 348-468 (SSSK…NSIR), 481-512 (ISSN…GERV), and 530-573 (ESDI…GPNV). The span at 145–155 (TPLNRSRSGSI) shows a compositional bias: polar residues. Residues 162–269 (NNLTSSSSSS…NNNNNNNSNS (108 aa)) are compositionally biased toward low complexity. A compositionally biased stretch (polar residues) spans 270 to 281 (GGSSRMITSKSQ). Composition is skewed to low complexity over residues 288–311 (TSNT…TPTN) and 352–464 (LLIP…QPSN). The segment covering 533–560 (ISSSPRSIGSPNSIRASISSQLPPSLSS) has biased composition (low complexity). Residues 561–570 (IGGGGGGGSG) show a composition bias toward gly residues. The PI3K-RBD domain occupies 821-934 (PNKITIMVLL…NQTVELSLTN (114 aa)). The segment at 996–1078 (KETNKENKDS…SGSGNGSEQP (83 aa)) is disordered. Residues 997–1011 (ETNKENKDSNKENKD) are compositionally biased toward basic and acidic residues. The segment covering 1012–1056 (SSSNNNNNNNNNNNNNNNNNNNNNNNNNNNGNNNGNNSNNNSNSN) has biased composition (low complexity). The region spanning 1099–1271 (VKRLFRVNIA…QPIILLVEFE (173 aa)) is the C2 PI3K-type domain. The PIK helical domain occupies 1326–1503 (PVGLKKLDLD…GLLLEGYLRS (178 aa)). The PI3K/PI4K catalytic domain occupies 1568 to 1845 (IIDKCRYMDS…NISVALNTKT (278 aa)). Residues 1574-1580 (YMDSKKL) form a G-loop region. The interval 1711 to 1719 (GIGDRHSDN) is catalytic loop. The activation loop stretch occupies residues 1730–1756 (HIDFGHFLGNYKKKYGFKRERAPFIFT).

Belongs to the PI3/PI4-kinase family.

It carries out the reaction a 1,2-diacyl-sn-glycero-3-phospho-(1D-myo-inositol) + ATP = a 1,2-diacyl-sn-glycero-3-phospho-(1D-myo-inositol-3-phosphate) + ADP + H(+). This is Phosphatidylinositol 3-kinase 2 (pikB) from Dictyostelium discoideum (Social amoeba).